The chain runs to 549 residues: Glucose-6-phosphate isomerase (549 aa).

The Proton donor role is filled by Glu355. Residues His387 and Lys515 contribute to the active site.

It belongs to the GPI family.

The protein resides in the cytoplasm. It catalyses the reaction alpha-D-glucose 6-phosphate = beta-D-fructose 6-phosphate. It participates in carbohydrate biosynthesis; gluconeogenesis. Its pathway is carbohydrate degradation; glycolysis; D-glyceraldehyde 3-phosphate and glycerone phosphate from D-glucose: step 2/4. Catalyzes the reversible isomerization of glucose-6-phosphate to fructose-6-phosphate. This Haemophilus influenzae (strain PittGG) protein is Glucose-6-phosphate isomerase.